The chain runs to 121 residues: Small ribosomal subunit protein uS13 (121 aa).

The disordered stretch occupies residues 95–121; that stretch reads LPVRGQNTKNNARTRKGKAVAIAGKKK. Residues 106–121 show a composition bias toward basic residues; that stretch reads ARTRKGKAVAIAGKKK.

This sequence belongs to the universal ribosomal protein uS13 family. Part of the 30S ribosomal subunit. Forms a loose heterodimer with protein S19. Forms two bridges to the 50S subunit in the 70S ribosome.

Its function is as follows. Located at the top of the head of the 30S subunit, it contacts several helices of the 16S rRNA. In the 70S ribosome it contacts the 23S rRNA (bridge B1a) and protein L5 of the 50S subunit (bridge B1b), connecting the 2 subunits; these bridges are implicated in subunit movement. Contacts the tRNAs in the A and P-sites. The protein is Small ribosomal subunit protein uS13 of Streptococcus thermophilus (strain CNRZ 1066).